Reading from the N-terminus, the 1262-residue chain is DNA-directed RNA polymerase subunit beta' (1262 aa).

4 residues coordinate Zn(2+): Cys220, Cys294, Cys301, and Cys304.

It belongs to the RNA polymerase beta' chain family. RpoC2 subfamily. As to quaternary structure, in cyanobacteria the RNAP catalytic core is composed of 2 alpha, 1 beta, 1 beta', 1 gamma and 1 omega subunit. When a sigma factor is associated with the core the holoenzyme is formed, which can initiate transcription. Requires Zn(2+) as cofactor.

It catalyses the reaction RNA(n) + a ribonucleoside 5'-triphosphate = RNA(n+1) + diphosphate. In terms of biological role, DNA-dependent RNA polymerase catalyzes the transcription of DNA into RNA using the four ribonucleoside triphosphates as substrates. The polypeptide is DNA-directed RNA polymerase subunit beta' (Gloeobacter violaceus (strain ATCC 29082 / PCC 7421)).